Here is a 598-residue protein sequence, read N- to C-terminus: Aspartate--tRNA(Asp/Asn) ligase (598 aa).

E174 is an L-aspartate binding site. Positions 198–201 are aspartate; that stretch reads QQLK. R220 lines the L-aspartate pocket. ATP-binding positions include 220 to 222 and Q229; that span reads RDE. H458 contacts L-aspartate. E492 contacts ATP. R499 is an L-aspartate binding site. 544-547 contacts ATP; that stretch reads GIDR.

This sequence belongs to the class-II aminoacyl-tRNA synthetase family. Type 1 subfamily. Homodimer.

Its subcellular location is the cytoplasm. The catalysed reaction is tRNA(Asx) + L-aspartate + ATP = L-aspartyl-tRNA(Asx) + AMP + diphosphate. Functionally, aspartyl-tRNA synthetase with relaxed tRNA specificity since it is able to aspartylate not only its cognate tRNA(Asp) but also tRNA(Asn). Reaction proceeds in two steps: L-aspartate is first activated by ATP to form Asp-AMP and then transferred to the acceptor end of tRNA(Asp/Asn). The protein is Aspartate--tRNA(Asp/Asn) ligase of Dehalococcoides mccartyi (strain CBDB1).